Here is a 141-residue protein sequence, read N- to C-terminus: MRQRTIVCPLIQNDGYYLLCKMADNRGVFPGQWALSGGGVEPGERIEEALRREVREELGEQLILSDITPWTFRDDIRVKTYADGRQEEIYMIYLIFDCVSANRDICINDEFQDYAWVKPEELALYDLNVATRHTLALKGLL.

The 141-residue stretch at 1–141 (MRQRTIVCPL…RHTLALKGLL (141 aa)) folds into the Nudix hydrolase domain. A Nudix box motif is present at residues 38–59 (GGVEPGERIEEALRREVREELG).

It belongs to the Nudix hydrolase family. NudI subfamily. Monomer. Mg(2+) is required as a cofactor.

The enzyme catalyses a ribonucleoside 5'-triphosphate + H2O = a ribonucleoside 5'-phosphate + diphosphate + H(+). It carries out the reaction a 2'-deoxyribonucleoside 5'-triphosphate + H2O = a 2'-deoxyribonucleoside 5'-phosphate + diphosphate + H(+). The catalysed reaction is dUTP + H2O = dUMP + diphosphate + H(+). It catalyses the reaction dTTP + H2O = dTMP + diphosphate + H(+). The enzyme catalyses dCTP + H2O = dCMP + diphosphate + H(+). Catalyzes the hydrolysis of nucleoside triphosphates, with a preference for pyrimidine deoxynucleoside triphosphates (dUTP, dTTP and dCTP). The sequence is that of Nucleoside triphosphatase NudI from Salmonella agona (strain SL483).